The sequence spans 235 residues: Segregation and condensation protein A (235 aa).

Belongs to the ScpA family. Component of a cohesin-like complex composed of ScpA, ScpB and the Smc homodimer, in which ScpA and ScpB bind to the head domain of Smc. The presence of the three proteins is required for the association of the complex with DNA.

It localises to the cytoplasm. Its function is as follows. Participates in chromosomal partition during cell division. May act via the formation of a condensin-like complex containing Smc and ScpB that pull DNA away from mid-cell into both cell halves. The sequence is that of Segregation and condensation protein A from Streptococcus equi subsp. zooepidemicus (strain MGCS10565).